A 400-amino-acid polypeptide reads, in one-letter code: DNA alpha-glucosyltransferase (400 aa).

Interacts with clamp protein gp45.

It catalyses the reaction Transfers an alpha-D-glucosyl residue from UDP-glucose to a hydroxymethylcytosine residue in DNA.. Its pathway is genetic information processing; DNA modification. In terms of biological role, catalyzes the transfer of glucose from uridine diphosphoglucose to 5-hydroxymethyl cytosine of T4 DNA to yield glucosyl 5-hydroxymethyl cytosine (glc-HMC). This DNA process seems to occur immediately after DNA synthesis since the DNA alpha-glucosyltransferase interacts with the clamp protein gp45. The glc-HMC modification protects the phage genome against its own nucleases and the host restriction endonuclease system. The glc-HMC modification also protects against the host CRISPR-Cas9 defense system. The sequence is that of DNA alpha-glucosyltransferase (agt) from Escherichia coli (Bacteriophage T4).